Here is a 276-residue protein sequence, read N- to C-terminus: Cell division protein FtsQ (276 aa).

Over 1–27 (MSQAALNTRNSEEEVSSRRNNGTRLAG) the chain is Cytoplasmic. The chain crosses the membrane as a helical span at residues 28 to 48 (ILFLLTVLTTVLVSGWVVLGW). The Periplasmic segment spans residues 49-276 (MEDAQRLPLS…QQNQAQAEQQ (228 aa)). Positions 55 to 126 (LPLSKLVLTG…DELKIHLVEY (72 aa)) constitute a POTRA domain. A disordered region spans residues 255-276 (GWAPLPPEESTQQQNQAQAEQQ). The segment covering 266–276 (QQQNQAQAEQQ) has biased composition (low complexity).

Belongs to the FtsQ/DivIB family. FtsQ subfamily. As to quaternary structure, part of a complex composed of FtsB, FtsL and FtsQ. The complex can be formed before its localization to the division site. This tripartite complex can be divided further into a subcomplex of FtsB and FtsL, which forms in the absence of FtsQ. Interacts with FtsA, FtsK, FtsL, FtsB, FtsW, FtsI, FtsN, FtsX and YmgF.

It is found in the cell inner membrane. Its function is as follows. Essential cell division protein. May link together the upstream cell division proteins, which are predominantly cytoplasmic, with the downstream cell division proteins, which are predominantly periplasmic. May control correct divisome assembly. This chain is Cell division protein FtsQ, found in Escherichia coli (strain K12).